The primary structure comprises 676 residues: Envelope glycoprotein (676 aa).

An N-terminal signal peptide occupies residues 1–32 (MEGLSLLQLPRDKFRKSSFFVWVIILFQKAFS). The Extracellular portion of the chain corresponds to 33–650 (MPLGVVTNST…DDNWWTGWRQ (618 aa)). A glycan (N-linked (GlcNAc...) asparagine; by host) is linked at N40. Disulfide bonds link C53-C609, C108-C135, C121-C147, C511-C556, and C601-C608. Residues 54–201 (KDHLASTDQL…TFLQSPPIRE (148 aa)) are receptor-binding. N204, N208, N238, N257, N268, N296, and N314 each carry an N-linked (GlcNAc...) asparagine; by host glycan. Residues 305 to 485 (ELSFETLSLN…STSNGLITST (181 aa)) form a mucin-like region region. Residues 312 to 351 (SLNETEDDDATSSRTTKGRISDRATRKYSDLVPKDSPGMV) form a disordered region. Basic and acidic residues predominate over residues 330 to 344 (RISDRATRKYSDLVP). The N-linked (GlcNAc...) asparagine; by host glycan is linked to N366. Positions 406–458 (SSSQILSSSPTMAPSPETQTSTTYTPKLPVMTTEEPTTPPRNSPGSTTEAPTL) are disordered. Composition is skewed to polar residues over residues 415–430 (PTMA…TTYT) and 448–458 (SPGSTTEAPTL). An N-linked (GlcNAc...) asparagine; by host glycan is attached at N463. The interval 524 to 539 (HNAAGIAWIPYFGPGA) is fusion peptide. A coiled-coil region spans residues 554-595 (LVCGLRQLANETTQALQLFLRATTELRTYTILNRKAIDFLLR). N-linked (GlcNAc...) asparagine; by host glycosylation is present at N563. Positions 615 to 634 (WTKNITDKINQIIHDFIDNP) form a coiled coil. N-linked (GlcNAc...) asparagine; by host glycosylation occurs at N618. Residues 651–671 (WIPAGIGITGIIIAIIALLCV) traverse the membrane as a helical segment. 2 S-palmitoyl cysteine; by host lipidation sites follow: C670 and C672. Topologically, residues 672 to 676 (CKLLC) are cytoplasmic.

The protein belongs to the filoviruses glycoprotein family. In terms of assembly, homotrimer; each monomer consists of a GP1 and a GP2 subunit linked by disulfide bonds. The resulting peplomers (GP1,2) protrude from the virus surface as spikes. Interacts with host integrin alpha-V/ITGAV. Interacts with host CLEC10A. Binds also to host CD209 and CLEC4M/DC-SIGN(R). Interacts with host FOLR1. Interacts with BST2; this interaction inhibits the antiviral effect of BST2 and this allows viral release from infected cells. Interacts with host FCN1; this interaction enhances viral entry. Interacts with host TLR4; this interaction induces cell death in T-lymphocytes or proinflammatory cytokines and SOCS1 production in monocytes. As to quaternary structure, interacts with host entry receptor NPC1. GP1 and GP2delta are part of GP1,2delta soluble complexes released by ectodomain shedding. Post-translationally, the signal peptide region modulates GP's high mannose glycosylation, thereby determining the efficiency of the interactions with DC-SIGN(R). N-glycosylated. In terms of processing, O-glycosylated in the mucin-like region. Post-translationally, palmitoylation of GP2 is not required for its function. Specific enzymatic cleavages in vivo yield mature proteins. The precursor is processed into GP1 and GP2 by host cell furin in the trans Golgi, and maybe by other host proteases, to yield the mature GP1 and GP2 proteins. The cleavage site corresponds to the furin optimal cleavage sequence [KR]-X-[KR]-R. This cleavage does not seem to be required for function. After the internalization of the virus into cell endosomes, GP1 C-terminus is removed by the endosomal proteases cathepsin B, cathepsin L, or both, leaving a 19-kDa N-terminal fragment which is further digested by cathepsin B. Proteolytic processing of GP1,2 by host ADAM17 can remove the transmembrane anchor of GP2 and leads to shedding of complexes consisting in GP1 and truncated GP2 (GP1,2delta).

The protein resides in the virion membrane. Its subcellular location is the host cell membrane. It localises to the secreted. Its function is as follows. Trimeric GP1,2 complexes form the virion surface spikes and mediate the viral entry processes, with GP1 acting as the receptor-binding subunit and GP2 as the membrane fusion subunit. At later times of infection, down-regulates the expression of various host cell surface molecules that are essential for immune surveillance and cell adhesion. Down-modulates several integrins including ITGA1, ITGA2, ITGA3, ITGA4, ITGA5, ITGA6, ITGAV and ITGB1. This decrease in cell adhesion molecules may lead to cell detachment, contributing to the disruption of blood vessel integrity and hemorrhages developed during infection (cytotoxicity). Interacts with host TLR4 and thereby stimulates the differentiation and activation of monocytes leading to bystander death of T-lymphocytes. Down-regulates as well the function of host natural killer cells. Counteracts the antiviral effect of host BST2/tetherin that restricts release of progeny virions from infected cells. However, cooperates with VP40 and host BST2 to activate canonical NF-kappa-B pathway in a manner dependent on neddylation. Functions as a decoy for anti-GP1,2 antibodies thereby contributing to viral immune evasion. Interacts and activates host macrophages and dendritic cells inducing up-regulation of cytokine transcription. This effect is mediated throught activation of host TLR4. Functionally, responsible for binding to the receptor(s) on target cells. Interacts with CD209/DC-SIGN and CLEC4M/DC-SIGNR which act as cofactors for virus entry into dendritic cells (DCs) and endothelial cells. Binding to the macrophage specific lectin CLEC10A also seems to enhance virus infectivity. Interaction with FOLR1/folate receptor alpha may be a cofactor for virus entry in some cell types, although results are contradictory. Members of the Tyro3 receptor tyrosine kinase family also seem to be cell entry factors in filovirus infection. Once attached, the virions are internalized through clathrin-dependent endocytosis and/or macropinocytosis. After internalization of the virus into the endosomes of the host cell, proteolysis of GP1 by two cysteine proteases, CTSB/cathepsin B and CTSL/cathepsin L removes the glycan cap and allows GP1 binding to the host entry receptor NPC1. NPC1-binding, Ca(2+) and acidic pH induce a conformational change of GP2, which unmasks its fusion peptide and permit membranes fusion. In terms of biological role, acts as a class I viral fusion protein. Under the current model, the protein has at least 3 conformational states: pre-fusion native state, pre-hairpin intermediate state, and post-fusion hairpin state. During viral and target cell membrane fusion, the coiled coil regions (heptad repeats) assume a trimer-of-hairpins structure, positioning the fusion peptide in close proximity to the C-terminal region of the ectodomain. The formation of this structure appears to drive apposition and subsequent fusion of viral and target cell membranes. Responsible for penetration of the virus into the cell cytoplasm by mediating the fusion of the membrane of the endocytosed virus particle with the endosomal membrane. Low pH in endosomes induces an irreversible conformational change in GP2, releasing the fusion hydrophobic peptide. This chain is Envelope glycoprotein (GP), found in Sudan ebolavirus (strain Maleo-79) (SEBOV).